Reading from the N-terminus, the 130-residue chain is Small ribosomal subunit protein uS8 (130 aa).

Belongs to the universal ribosomal protein uS8 family. In terms of assembly, part of the 30S ribosomal subunit. Contacts proteins S5 and S12.

One of the primary rRNA binding proteins, it binds directly to 16S rRNA central domain where it helps coordinate assembly of the platform of the 30S subunit. The polypeptide is Small ribosomal subunit protein uS8 (Haemophilus ducreyi (strain 35000HP / ATCC 700724)).